The sequence spans 874 residues: Alanine--tRNA ligase (874 aa).

Residues H564, H568, C665, and H669 each coordinate Zn(2+).

Belongs to the class-II aminoacyl-tRNA synthetase family. Zn(2+) serves as cofactor.

It localises to the cytoplasm. The enzyme catalyses tRNA(Ala) + L-alanine + ATP = L-alanyl-tRNA(Ala) + AMP + diphosphate. Its function is as follows. Catalyzes the attachment of alanine to tRNA(Ala) in a two-step reaction: alanine is first activated by ATP to form Ala-AMP and then transferred to the acceptor end of tRNA(Ala). Also edits incorrectly charged Ser-tRNA(Ala) and Gly-tRNA(Ala) via its editing domain. The polypeptide is Alanine--tRNA ligase (Burkholderia orbicola (strain MC0-3)).